Here is a 327-residue protein sequence, read N- to C-terminus: Annexin A8-like protein 1 (327 aa).

Annexin repeat units follow at residues 21-92 (FNPD…ALMY), 93-164 (PPYR…CLLQ), 177-249 (ALAL…TVVK), and 253-324 (NLHS…SLVG). The Ca(2+) site is built by Met266, Gly268, Gly270, and Asp310.

It belongs to the annexin family.

In Homo sapiens (Human), this protein is Annexin A8-like protein 1.